A 151-amino-acid chain; its full sequence is Deoxyuridine 5'-triphosphate nucleotidohydrolase (151 aa).

Residues 70–72 (RSG), Asn-83, 87–89 (LID), and Met-97 each bind substrate.

This sequence belongs to the dUTPase family. Mg(2+) is required as a cofactor.

The enzyme catalyses dUTP + H2O = dUMP + diphosphate + H(+). The protein operates within pyrimidine metabolism; dUMP biosynthesis; dUMP from dCTP (dUTP route): step 2/2. Functionally, this enzyme is involved in nucleotide metabolism: it produces dUMP, the immediate precursor of thymidine nucleotides and it decreases the intracellular concentration of dUTP so that uracil cannot be incorporated into DNA. The polypeptide is Deoxyuridine 5'-triphosphate nucleotidohydrolase (Yersinia pseudotuberculosis serotype O:1b (strain IP 31758)).